Consider the following 202-residue polypeptide: Large ribosomal subunit protein bL9 (202 aa).

The disordered stretch occupies residues 176–202; the sequence is AAGEFFDPDAQHDDEPAAEDDQNAEEK. Over residues 191-202 the composition is skewed to acidic residues; sequence PAAEDDQNAEEK.

Belongs to the bacterial ribosomal protein bL9 family.

Binds to the 23S rRNA. This is Large ribosomal subunit protein bL9 from Nitrobacter winogradskyi (strain ATCC 25391 / DSM 10237 / CIP 104748 / NCIMB 11846 / Nb-255).